Reading from the N-terminus, the 298-residue chain is Bifunctional protein FolD (298 aa).

NADP(+)-binding positions include 165-167 (GRS), Ser190, and Ile231.

The protein belongs to the tetrahydrofolate dehydrogenase/cyclohydrolase family. Homodimer.

It catalyses the reaction (6R)-5,10-methylene-5,6,7,8-tetrahydrofolate + NADP(+) = (6R)-5,10-methenyltetrahydrofolate + NADPH. The catalysed reaction is (6R)-5,10-methenyltetrahydrofolate + H2O = (6R)-10-formyltetrahydrofolate + H(+). The protein operates within one-carbon metabolism; tetrahydrofolate interconversion. In terms of biological role, catalyzes the oxidation of 5,10-methylenetetrahydrofolate to 5,10-methenyltetrahydrofolate and then the hydrolysis of 5,10-methenyltetrahydrofolate to 10-formyltetrahydrofolate. This Prochlorococcus marinus (strain MIT 9301) protein is Bifunctional protein FolD.